Here is a 434-residue protein sequence, read N- to C-terminus: BEN domain-containing protein 7 (434 aa).

Glycyl lysine isopeptide (Lys-Gly) (interchain with G-Cter in SUMO2) cross-links involve residues Lys-16, Lys-56, and Lys-85. 2 disordered regions span residues 96–151 (PQRS…SNGE) and 212–262 (SRKR…ERTS). Over residues 97–150 (QRSNSSTEASQGLHSNSRGAWNELPTQSGQFSGQSGPRSRTFQTQPHISASSNG) the composition is skewed to polar residues. A compositionally biased stretch (basic residues) spans 212–222 (SRKRNKKKKVL). A Glycyl lysine isopeptide (Lys-Gly) (interchain with G-Cter in SUMO2) cross-link involves residue Lys-244. One can recognise a BEN domain in the interval 289–399 (GFDVFMPKSQ…RRLKRGSAEV (111 aa)). Thr-326 bears the Phosphothreonine mark. Ser-330 bears the Phosphoserine mark. A disordered region spans residues 414–434 (TGHTFVIKRETPEDPEPGSVA).

This Mus musculus (Mouse) protein is BEN domain-containing protein 7 (Bend7).